The primary structure comprises 829 residues: UBA domain-containing protein 8 (829 aa).

In terms of domain architecture, EH 1 spans 10–109 (EQQEFDRLLE…KQAKDDHHIK (100 aa)). The EF-hand 1 domain occupies 43 to 78 (LPQKILAKIWDYCDQEDKGSLDRNQVYACFRLISQA). A disordered region spans residues 93–121 (GDPPILPKQAKDDHHIKRSSSETADFTPF). A phosphoserine mark is found at S112 and S113. EH domains are found at residues 129–225 (ERSE…AKSE) and 300–398 (DRSN…SDDT). The EF-hand 2 domain occupies 333 to 368 (LDSEELARIWDTVDTQDRGYIDKDEFAVAMEIIKLR). Polar residues-rich tracts occupy residues 466–506 (SFQD…TQSI) and 574–590 (TIPG…QTTE). 3 disordered regions span residues 466-520 (SFQD…VNSS), 574-614 (TIPG…MRKL), and 724-785 (KPQV…QSYE). Residues 602–709 (EPTEEEQEEM…AKIDSIIADS (108 aa)) adopt a coiled-coil conformation. Residues 728–737 (TPAPPTPAPT) show a composition bias toward pro residues. Residues 764-774 (HANSSTPMNYV) are compositionally biased toward polar residues. The segment covering 775 to 785 (SQPESPPQSYE) has biased composition (low complexity). Positions 788–828 (QNDNELLQELLSMGFPREKAVIALEATNYDVNEAANILLSS) constitute a UBA domain.

This Schizosaccharomyces pombe (strain 972 / ATCC 24843) (Fission yeast) protein is UBA domain-containing protein 8 (ucp8).